The sequence spans 902 residues: Respiratory nitrate reductase alpha chain (902 aa).

3 residues coordinate [4Fe-4S] cluster: histidine 29, cysteine 33, and cysteine 37.

This sequence belongs to the prokaryotic molybdopterin-containing oxidoreductase family. Heterotrimer composed of an alpha, a beta and a gamma chain. Alpha and beta are catalytic chains; gamma chains are involved in binding the enzyme complex to the cytoplasmic membrane. [4Fe-4S] cluster is required as a cofactor. The cofactor is Mo-bis(molybdopterin guanine dinucleotide).

The protein resides in the cell membrane. The protein localises to the cytoplasm. It carries out the reaction nitrate + a quinol = a quinone + nitrite + H2O. With respect to regulation, inhibited by micromolar concentrations of azide. The nitrate reductase enzyme complex allows Bradyrhizobium sp. USDA 3045 to use nitrate as an electron acceptor during anaerobic growth. The alpha chain is the actual site of nitrate reduction. This Bradyrhizobium sp protein is Respiratory nitrate reductase alpha chain (narG).